A 419-amino-acid chain; its full sequence is uncharacterized protein (419 aa).

This is an uncharacterized protein from Acinetobacter baylyi (strain ATCC 33305 / BD413 / ADP1).